A 576-amino-acid chain; its full sequence is MAGUK p55 subfamily member 7 (576 aa).

L27 domains lie at 10–64 (CDMG…EKQN) and 65–122 (PLPI…YDPV). A PDZ domain is found at 139-220 (IIRLVKNSEP…AITFKIIPST (82 aa)). The 71-residue stretch at 228–298 (EGKIFIKALF…PSKHFQERRL (71 aa)) folds into the SH3 domain. Residues 289-383 (PSKHFQERRL…VGPVGVGLNE (95 aa)) form a phospho-regulated basic and hydrophobic (PRBH) motif region. The region spanning 368 to 560 (YRLIVLVGPV…AFNELKTTFD (193 aa)) is the Guanylate kinase-like domain. The residue at position 409 (Ser409) is a Phosphoserine.

It belongs to the MAGUK family. As to quaternary structure, heterodimer; able to heterodimerize via its C-terminal L27 domain with LIN7A, LIN7B and LIN7C. Forms a tripartite complex composed of DLG1, MPP7 and LIN7 (LIN7A or LIN7C). Interacts with DLG1 via its N-terminal L27 domain. Interacts with PALS1 and PATJ. Post-translationally, phosphorylated by aPKC which promotes dissociation from the cell cortex.

The protein localises to the membrane. Its subcellular location is the lateral cell membrane. It is found in the cell junction. The protein resides in the tight junction. It localises to the adherens junction. The protein localises to the cytoplasm. Its subcellular location is the cell cortex. Its function is as follows. Acts as an important adapter that promotes epithelial cell polarity and tight junction formation via its interaction with DLG1. Involved in the assembly of protein complexes at sites of cell-cell contact. This Mus musculus (Mouse) protein is MAGUK p55 subfamily member 7 (Mpp7).